We begin with the raw amino-acid sequence, 801 residues long: Fibroblast growth factor receptor 3 (801 aa).

The signal sequence occupies residues 1–20; the sequence is MVVPACVLVFCVAVVAGATS. The Extracellular segment spans residues 21–369; it reads EPPGPEQRVV…TDEAGSVYAG (349 aa). The region spanning 22–124 is the Ig-like C2-type 1 domain; that stretch reads PPGPEQRVVR…VLCHFSVRVT (103 aa). Cysteine 59 and cysteine 107 form a disulfide bridge. A glycan (N-linked (GlcNAc...) asparagine) is linked at asparagine 96. The segment at 125–146 is disordered; it reads DAPSSGDDEDGEDVAEDTGAPY. Over residues 130-140 the composition is skewed to acidic residues; it reads GDDEDGEDVAE. 2 Ig-like C2-type domains span residues 145-238 and 247-349; these read PYWT…YTLD and PILQ…AWLV. An intrachain disulfide couples cysteine 170 to cysteine 222. N-linked (GlcNAc...) asparagine glycans are attached at residues asparagine 219, asparagine 256, asparagine 288, asparagine 309, and asparagine 322. A disulfide bond links cysteine 269 and cysteine 333. The helical transmembrane segment at 370–390 threads the bilayer; sequence VLSYGVVFFLFILVVAAVILC. The Cytoplasmic portion of the chain corresponds to 391–801; it reads RLRSPPKKGL…GPPSNGGPRT (411 aa). Phosphoserine is present on residues serine 438 and serine 439. A Protein kinase domain is found at 466–756; it reads LTLGKPLGEG…LTVTSTDEYL (291 aa). ATP-binding positions include 472–480 and lysine 502; that span reads LGEGCFGQV. The active-site Proton acceptor is the aspartate 611. 4 positions are modified to phosphotyrosine; by autocatalysis: tyrosine 641, tyrosine 642, tyrosine 719, and tyrosine 755. The interval 762-801 is disordered; the sequence is FEQYSPGGQDTPSSSSSGDDSVFTHDLLPPGPPSNGGPRT. A compositionally biased stretch (low complexity) spans 766–782; it reads SPGGQDTPSSSSSGDDS. The span at 790 to 801 shows a compositional bias: pro residues; the sequence is PPGPPSNGGPRT.

It belongs to the protein kinase superfamily. Tyr protein kinase family. Fibroblast growth factor receptor subfamily. In terms of assembly, monomer. Homodimer after ligand binding. Interacts with FGF1, FGF2, FGF4, FGF6; FGF8, FGF9, FGF10, FGF17, FGF18, FGF19, FGF20 and FGF23 (in vitro). Interacts with KLB. Affinity for fibroblast growth factors (FGFs) is increased by heparan sulfate glycosaminoglycans that function as coreceptors. Likewise, KLB increases the affinity for FGF19 and FGF21. Interacts with PIK3R1, PLCG1, SOCS1 and SOCS3. Autophosphorylated. Binding of FGF family members together with heparan sulfate proteoglycan or heparin promotes receptor dimerization and autophosphorylation on tyrosine residues. Autophosphorylation occurs in trans between the two FGFR molecules present in the dimer. Phosphorylation at Tyr-719 is essential for stimulation of cell proliferation and activation of PIK3R1, STAT1 and MAP kinase signaling. Phosphorylation at Tyr-755 is required for interaction with PIK3R1 and PLCG1. In terms of processing, ubiquitinated. Is rapidly ubiquitinated after ligand binding and autophosphorylation, leading to receptor internalization and degradation. Subject to both proteasomal and lysosomal degradation. Post-translationally, N-glycosylated in the endoplasmic reticulum. The N-glycan chains undergo further maturation to an Endo H-resistant form in the Golgi apparatus. In terms of tissue distribution, in embryo, expressed in heart, lung, kidney, skin, head and liver but not in muscle. In adult, highest levels in brain. Also expressed in liver, lung, kidney, testis, ovary and uterus. Very low levels in heart, thymus, spleen and muscle.

The protein localises to the cell membrane. It localises to the cytoplasmic vesicle. Its subcellular location is the endoplasmic reticulum. The enzyme catalyses L-tyrosyl-[protein] + ATP = O-phospho-L-tyrosyl-[protein] + ADP + H(+). Its activity is regulated as follows. Present in an inactive conformation in the absence of bound ligand. Ligand binding leads to dimerization and activation by autophosphorylation on tyrosine residues. Tyrosine-protein kinase that acts as a cell-surface receptor for fibroblast growth factors and plays an essential role in the regulation of cell proliferation, differentiation and apoptosis. Plays an essential role in the regulation of chondrocyte differentiation, proliferation and apoptosis, and is required for normal skeleton development. Regulates both osteogenesis and postnatal bone mineralization by osteoblasts. Promotes apoptosis in chondrocytes, but can also promote cancer cell proliferation. Required for normal development of the inner ear. Phosphorylates PLCG1, CBL and FRS2. Ligand binding leads to the activation of several signaling cascades. Activation of PLCG1 leads to the production of the cellular signaling molecules diacylglycerol and inositol 1,4,5-trisphosphate. Phosphorylation of FRS2 triggers recruitment of GRB2, GAB1, PIK3R1 and SOS1, and mediates activation of RAS, MAPK1/ERK2, MAPK3/ERK1 and the MAP kinase signaling pathway, as well as of the AKT1 signaling pathway. Plays a role in the regulation of vitamin D metabolism. Mutations that lead to constitutive kinase activation or impair normal FGFR3 maturation, internalization and degradation lead to aberrant signaling. Over-expressed or constitutively activated FGFR3 promotes activation of STAT1, STAT5A and STAT5B. Plays a role in postnatal lung development. The polypeptide is Fibroblast growth factor receptor 3 (Fgfr3) (Mus musculus (Mouse)).